A 50-amino-acid polypeptide reads, in one-letter code: Single-stranded DNA-binding protein (50 aa).

In terms of assembly, homodimer in the absence of DNA, monomer when binding DNA.

Binds preferentially to single-stranded DNA and therefore, destabilizes double-stranded DNA. It is involved in DNA replication, repair and recombination. Binds ss-DNA as the replication fork advances and stimulates the replisome processivity and accuracy. The protein is Single-stranded DNA-binding protein (32) of Enterobacteria phage RB27 (Bacteriophage RB27).